A 441-amino-acid chain; its full sequence is tRNA modification GTPase MnmE (441 aa).

Residues Arg-24, Glu-81, and Lys-121 each contribute to the (6S)-5-formyl-5,6,7,8-tetrahydrofolate site. The TrmE-type G domain occupies 218–366 (GMVVAIAGPP…LLRELTRFAA (149 aa)). GTP contacts are provided by residues 228 to 233 (NVGKST), 247 to 253 (SPHAGTT), and 272 to 275 (DTAG). Mg(2+) is bound by residues Ser-232 and Thr-253. Position 441 (Lys-441) interacts with (6S)-5-formyl-5,6,7,8-tetrahydrofolate.

Belongs to the TRAFAC class TrmE-Era-EngA-EngB-Septin-like GTPase superfamily. TrmE GTPase family. Homodimer. Heterotetramer of two MnmE and two MnmG subunits. K(+) serves as cofactor.

The protein resides in the cytoplasm. Functionally, exhibits a very high intrinsic GTPase hydrolysis rate. Involved in the addition of a carboxymethylaminomethyl (cmnm) group at the wobble position (U34) of certain tRNAs, forming tRNA-cmnm(5)s(2)U34. The protein is tRNA modification GTPase MnmE of Rhodopseudomonas palustris (strain ATCC BAA-98 / CGA009).